The chain runs to 273 residues: Dermonecrotic toxin LspaSicTox-alphaIA2iv (273 aa).

The active site involves H5. Positions 25 and 27 each coordinate Mg(2+). Residue H41 is the Nucleophile of the active site. Disulfide bonds link C45–C51 and C47–C190. Position 85 (D85) interacts with Mg(2+).

This sequence belongs to the arthropod phospholipase D family. Class II subfamily. The cofactor is Mg(2+). In terms of tissue distribution, expressed by the venom gland.

It is found in the secreted. It catalyses the reaction an N-(acyl)-sphingosylphosphocholine = an N-(acyl)-sphingosyl-1,3-cyclic phosphate + choline. It carries out the reaction an N-(acyl)-sphingosylphosphoethanolamine = an N-(acyl)-sphingosyl-1,3-cyclic phosphate + ethanolamine. The enzyme catalyses a 1-acyl-sn-glycero-3-phosphocholine = a 1-acyl-sn-glycero-2,3-cyclic phosphate + choline. The catalysed reaction is a 1-acyl-sn-glycero-3-phosphoethanolamine = a 1-acyl-sn-glycero-2,3-cyclic phosphate + ethanolamine. Its function is as follows. Dermonecrotic toxins cleave the phosphodiester linkage between the phosphate and headgroup of certain phospholipids (sphingolipid and lysolipid substrates), forming an alcohol (often choline) and a cyclic phosphate. This toxin acts on sphingomyelin (SM). It may also act on ceramide phosphoethanolamine (CPE), lysophosphatidylcholine (LPC) and lysophosphatidylethanolamine (LPE), but not on lysophosphatidylserine (LPS), and lysophosphatidylglycerol (LPG). It acts by transphosphatidylation, releasing exclusively cyclic phosphate products as second products. Induces dermonecrosis, hemolysis, increased vascular permeability, edema, inflammatory response, and platelet aggregation. This chain is Dermonecrotic toxin LspaSicTox-alphaIA2iv, found in Loxosceles spadicea (Recluse spider).